Here is a 284-residue protein sequence, read N- to C-terminus: Shikimate kinase (284 aa).

85–95 (PLAAGLKSSSA) contributes to the ATP binding site.

This sequence belongs to the GHMP kinase family. Archaeal shikimate kinase subfamily.

It is found in the cytoplasm. The catalysed reaction is shikimate + ATP = 3-phosphoshikimate + ADP + H(+). The protein operates within metabolic intermediate biosynthesis; chorismate biosynthesis; chorismate from D-erythrose 4-phosphate and phosphoenolpyruvate: step 5/7. This is Shikimate kinase from Halobacterium salinarum (strain ATCC 29341 / DSM 671 / R1).